The following is a 79-amino-acid chain: Small ribosomal subunit protein uS17 (79 aa).

The protein belongs to the universal ribosomal protein uS17 family. Part of the 30S ribosomal subunit.

In terms of biological role, one of the primary rRNA binding proteins, it binds specifically to the 5'-end of 16S ribosomal RNA. In Paramagnetospirillum magneticum (strain ATCC 700264 / AMB-1) (Magnetospirillum magneticum), this protein is Small ribosomal subunit protein uS17.